Reading from the N-terminus, the 957-residue chain is UvrABC system protein A (957 aa).

33–40 lines the ATP pocket; sequence GLSGSGKS. A C4-type zinc finger spans residues 252-279; that stretch reads CPQCGFSIPELEPRMFSFNSPFGACPTC. 2 ABC transporter domains span residues 309 to 587 and 607 to 935; these read WEPI…AKSL and PNGR…KYLR. 639–646 serves as a coordination point for ATP; it reads GVSGSGKS. A C4-type zinc finger spans residues 738–764; that stretch reads CEACRGDGIIKIEMHFLPDVYVPCEVC.

This sequence belongs to the ABC transporter superfamily. UvrA family. As to quaternary structure, forms a heterotetramer with UvrB during the search for lesions.

The protein resides in the cytoplasm. Functionally, the UvrABC repair system catalyzes the recognition and processing of DNA lesions. UvrA is an ATPase and a DNA-binding protein. A damage recognition complex composed of 2 UvrA and 2 UvrB subunits scans DNA for abnormalities. When the presence of a lesion has been verified by UvrB, the UvrA molecules dissociate. This is UvrABC system protein A from Halalkalibacterium halodurans (strain ATCC BAA-125 / DSM 18197 / FERM 7344 / JCM 9153 / C-125) (Bacillus halodurans).